Here is a 149-residue protein sequence, read N- to C-terminus: Large-conductance mechanosensitive channel (149 aa).

A run of 2 helical transmembrane segments spans residues 8 to 28 (FIMR…SAFT) and 74 to 94 (IGSV…LFLI).

This sequence belongs to the MscL family. As to quaternary structure, homopentamer.

It localises to the cell membrane. Functionally, channel that opens in response to stretch forces in the membrane lipid bilayer. May participate in the regulation of osmotic pressure changes within the cell. In Enterococcus faecalis (strain ATCC 700802 / V583), this protein is Large-conductance mechanosensitive channel.